The sequence spans 153 residues: Endoribonuclease YbeY (153 aa).

Residues histidine 113, histidine 117, and histidine 123 each coordinate Zn(2+).

It belongs to the endoribonuclease YbeY family. Zn(2+) is required as a cofactor.

The protein resides in the cytoplasm. Functionally, single strand-specific metallo-endoribonuclease involved in late-stage 70S ribosome quality control and in maturation of the 3' terminus of the 16S rRNA. This Aliivibrio fischeri (strain ATCC 700601 / ES114) (Vibrio fischeri) protein is Endoribonuclease YbeY.